The chain runs to 438 residues: Na(+)/H(+) antiporter NhaA (438 aa).

The next 11 helical transmembrane spans lie at 23–43 (FGGIFLFLNAVLAMVVANSFL), 62–82 (FFIGFSLHNWIDDVLMALFFL), 104–124 (SFPVIAAIGGMIAPGLIYFFL), 133–153 (GFGIPMATDIAFALGVIMLLG), 162–182 (VFLITLAVADDLGAIVVIALF), 185–205 (TNLKFAWLLGALGVVLILAVL), 221–241 (VLLWFCVHQSGIHATIAAVIL), 302–322 (FLAPISGYFIMPLFAFANAGV), 337–357 (LGVILGLCLGKPLGIFLITFI), 372–392 (WWHILGAGLLAGIGFTMSMFI), and 410–430 (IAILLGSLISGIIGALYLFAL).

This sequence belongs to the NhaA Na(+)/H(+) (TC 2.A.33) antiporter family.

Its subcellular location is the cell inner membrane. It carries out the reaction Na(+)(in) + 2 H(+)(out) = Na(+)(out) + 2 H(+)(in). Na(+)/H(+) antiporter that extrudes sodium in exchange for external protons. This Helicobacter pylori (strain HPAG1) protein is Na(+)/H(+) antiporter NhaA.